Reading from the N-terminus, the 360-residue chain is ELAV-like protein 2 (360 aa).

Residues 1–36 (METQLSNGPTCNNTANGPTTVNNNCSSPVDSGNTED) are disordered. RRM domains follow at residues 39–117 (TNLI…YARP) and 125–205 (ANLY…FANN). Residue Ser221 is modified to Phosphoserine. Positions 277 to 355 (WCIFVYNLAP…RVLQVSFKTN (79 aa)) constitute an RRM 3 domain.

The protein belongs to the RRM elav family. As to quaternary structure, interacts with IGF2BP1. Interacts with MAP1B light chain LC1. As to expression, brain; neural-specific. Expressed in the hippocampus.

In terms of biological role, RNA-binding protein that binds to the 3' untranslated region (3'UTR) of target mRNAs. Seems to recognize a GAAA motif. Can bind to its own 3'UTR, the FOS 3'UTR and the ID 3'UTR. The sequence is that of ELAV-like protein 2 (Elavl2) from Mus musculus (Mouse).